A 499-amino-acid chain; its full sequence is uncharacterized protein (499 aa).

Transmembrane regions (helical) follow at residues 5–25 (FLLV…YNAV), 79–99 (LGLR…TYLL), 110–130 (ALLS…ARYA), 132–152 (PEVP…EYFT), 170–190 (VLTK…FYLL), 203–223 (YAGT…QYLV), 252–272 (ALDI…ALFW), 286–306 (VWFS…PVYI), 332–352 (LSLI…SLYF), 354–374 (FSAT…LKKY), and 377–397 (LPAF…LPYV).

It belongs to the glycosyltransferase 39 family.

The protein localises to the cell membrane. This is an uncharacterized protein from Aquifex aeolicus (strain VF5).